The following is a 439-amino-acid chain: Glutamate--tRNA ligase 2 (439 aa).

The 'HIGH' region signature appears at 6-16 (PSPTGDMHIGN). A 'KMSKS' region motif is present at residues 232-236 (KMSKR). Residue lysine 235 coordinates ATP.

The protein belongs to the class-I aminoacyl-tRNA synthetase family. Glutamate--tRNA ligase type 1 subfamily. As to quaternary structure, monomer.

The protein localises to the cytoplasm. The enzyme catalyses tRNA(Glu) + L-glutamate + ATP = L-glutamyl-tRNA(Glu) + AMP + diphosphate. Its function is as follows. Catalyzes the attachment of glutamate to tRNA(Glu) in a two-step reaction: glutamate is first activated by ATP to form Glu-AMP and then transferred to the acceptor end of tRNA(Glu). This is Glutamate--tRNA ligase 2 from Helicobacter pylori (strain HPAG1).